A 342-amino-acid polypeptide reads, in one-letter code: MSAFTPASEVLLRHSDDFEQSRILFAGDLQDDLPARFECAASRAHTQQFHHWQALSRQMGENVRFSLVAQASDVADCDTLIYYWPKNKPEAQFQLMNILSLMPVGVDVFVVGENRSGVRSAEPMLADYAPLNKVDSARRCGLYHGRLEKQPQFSLESWWAEYSIDGLTIKTLPGVFSRDGLDVGSQLLLSTLTPHTKGKVLDVGCGAGVLSAALASHSPKVRLTLCDVSAPAVEASRATLAANGLEGEVFASNVFSEVKGRFDMIISNPPFHDGMQTSLDAAQTLIRGAVRHLNSGGELRIVANAFLPYPKILDETFGFHEVIAQTGRFKVYRTVMTRQAKK.

It belongs to the methyltransferase superfamily. RsmC family. As to quaternary structure, monomer.

Its subcellular location is the cytoplasm. The catalysed reaction is guanosine(1207) in 16S rRNA + S-adenosyl-L-methionine = N(2)-methylguanosine(1207) in 16S rRNA + S-adenosyl-L-homocysteine + H(+). Specifically methylates the guanine in position 1207 of 16S rRNA in the 30S particle. This chain is Ribosomal RNA small subunit methyltransferase C, found in Salmonella heidelberg (strain SL476).